Here is a 301-residue protein sequence, read N- to C-terminus: Inactive C-alpha-formylglycine-generating enzyme 2 (301 aa).

A signal peptide spans M1–G25. Residues C156 and C290 are joined by a disulfide bond. N191 carries N-linked (GlcNAc...) asparagine glycosylation. Ca(2+) contacts are provided by N194, L195, D208, F210, D229, G232, V234, and E236. Positions R274–D284 are enriched in polar residues. Residues R274 to L301 are disordered. A Non-canonical ER retention motif motif is present at residues P298–L301.

Belongs to the sulfatase-modifying factor family. As to quaternary structure, homodimer and heterodimer with SUMF1.

It is found in the endoplasmic reticulum lumen. Lacks formylglycine generating activity and is unable to convert newly synthesized inactive sulfatases to their active form. Inhibits the activation of sulfatases by SUMF1. The protein is Inactive C-alpha-formylglycine-generating enzyme 2 of Bos taurus (Bovine).